A 624-amino-acid chain; its full sequence is Membrane protein insertase YidC (624 aa).

Residues 8 to 28 (MIIAIALSLAVLLGWNYFVTA) form a helical membrane-spanning segment. Residues 36–95 (QQQAAQVNPSQGVNPSQGVDPSQGVNASPSPKEGGPSAPVPGTLPGAAGGSPQAALARDE) form a disordered region. Residues 43–64 (NPSQGVNPSQGVDPSQGVNASP) are compositionally biased toward polar residues. Helical transmembrane passes span 370–390 (FDLL…FKAL), 396–416 (LFGN…LFFL), 470–490 (WPVL…FVTI), 526–542 (LLHL…TMFL), and 559–579 (FTFM…GLVI).

This sequence belongs to the OXA1/ALB3/YidC family. Type 1 subfamily. As to quaternary structure, interacts with the Sec translocase complex via SecD. Specifically interacts with transmembrane segments of nascent integral membrane proteins during membrane integration.

Its subcellular location is the cell inner membrane. In terms of biological role, required for the insertion and/or proper folding and/or complex formation of integral membrane proteins into the membrane. Involved in integration of membrane proteins that insert both dependently and independently of the Sec translocase complex, as well as at least some lipoproteins. Aids folding of multispanning membrane proteins. The chain is Membrane protein insertase YidC from Methylobacterium sp. (strain 4-46).